We begin with the raw amino-acid sequence, 622 residues long: 4-hydroxyphenylalkanoate adenylyltransferase (622 aa).

Belongs to the ATP-dependent AMP-binding enzyme family.

It catalyses the reaction 17-(4-hydroxyphenyl)heptadecanoate + holo-[(phenol)carboxyphthiodiolenone synthase] + ATP = 17-(4-hydroxyphenyl)heptadecanoyl-[(phenol)carboxyphthiodiolenone synthase] + AMP + diphosphate. The enzyme catalyses 19-(4-hydroxyphenyl)nonadecanoate + holo-[(phenol)carboxyphthiodiolenone synthase] + ATP = 19-(4-hydroxyphenyl)nonadecanoyl-[(phenol)carboxyphthiodiolenone synthase] + AMP + diphosphate. The protein operates within lipid metabolism; fatty acid biosynthesis. Functionally, catalyzes the activation of long-chain fatty acids as acyl-adenylates (acyl-AMP), which are then transferred to the multifunctional polyketide synthase PpsA for further chain extension. Involved in the biosynthesis of phenolphthiocerol, which is an important intermediate in the biosynthesis of phenolic glycolipid (PGL), also called mycosid B. The sequence is that of 4-hydroxyphenylalkanoate adenylyltransferase (fadD29) from Mycobacterium marinum (strain ATCC BAA-535 / M).